Here is a 342-residue protein sequence, read N- to C-terminus: Probable RNA methyltransferase PST_2231 (342 aa).

Glu-91 functions as the Proton acceptor in the catalytic mechanism. One can recognise a Radical SAM core domain in the interval 94-320 (LLPRDGLCVS…TKVRNSAGQD (227 aa)). A disulfide bridge connects residues Cys-101 and Cys-325. Residues Cys-108, Cys-112, and Cys-115 each coordinate [4Fe-4S] cluster. Residues 153–154 (GE), Ser-183, 206–208 (SLH), and Asn-282 contribute to the S-adenosyl-L-methionine site. Residue Cys-325 is the S-methylcysteine intermediate of the active site.

It belongs to the radical SAM superfamily. RlmN family. [4Fe-4S] cluster serves as cofactor.

Its subcellular location is the cytoplasm. This chain is Probable RNA methyltransferase PST_2231, found in Stutzerimonas stutzeri (strain A1501) (Pseudomonas stutzeri).